The primary structure comprises 289 residues: ATP synthase subunit a (289 aa).

Helical transmembrane passes span 43–63 (AFHV…VLIF), 101–121 (SAVI…MNAV), 160–180 (LSVF…GGFI), 193–213 (LFVQ…TLIA), 232–252 (VFIL…GLGV), and 259–279 (AVFH…LTIV).

Belongs to the ATPase A chain family. In terms of assembly, F-type ATPases have 2 components, CF(1) - the catalytic core - and CF(0) - the membrane proton channel. CF(1) has five subunits: alpha(3), beta(3), gamma(1), delta(1), epsilon(1). CF(0) has three main subunits: a(1), b(2) and c(9-12). The alpha and beta chains form an alternating ring which encloses part of the gamma chain. CF(1) is attached to CF(0) by a central stalk formed by the gamma and epsilon chains, while a peripheral stalk is formed by the delta and b chains.

The protein localises to the cell inner membrane. Functionally, key component of the proton channel; it plays a direct role in the translocation of protons across the membrane. The protein is ATP synthase subunit a of Pseudomonas syringae pv. syringae (strain B728a).